The following is a 491-amino-acid chain: Probable glycine dehydrogenase (decarboxylating) subunit 2 (491 aa).

Lysine 273 carries the N6-(pyridoxal phosphate)lysine modification.

The protein belongs to the GcvP family. C-terminal subunit subfamily. The glycine cleavage system is composed of four proteins: P, T, L and H. In this organism, the P 'protein' is a heterodimer of two subunits. The cofactor is pyridoxal 5'-phosphate.

The catalysed reaction is N(6)-[(R)-lipoyl]-L-lysyl-[glycine-cleavage complex H protein] + glycine + H(+) = N(6)-[(R)-S(8)-aminomethyldihydrolipoyl]-L-lysyl-[glycine-cleavage complex H protein] + CO2. Its function is as follows. The glycine cleavage system catalyzes the degradation of glycine. The P protein binds the alpha-amino group of glycine through its pyridoxal phosphate cofactor; CO(2) is released and the remaining methylamine moiety is then transferred to the lipoamide cofactor of the H protein. In Bacillus anthracis (strain A0248), this protein is Probable glycine dehydrogenase (decarboxylating) subunit 2.